Reading from the N-terminus, the 459-residue chain is Replication initiator protein (459 aa).

Functionally, essential for pSAM2 replication. This Streptomyces ambofaciens protein is Replication initiator protein (repSA).